A 459-amino-acid chain; its full sequence is Mitochondrial distribution and morphology protein 34 (459 aa).

Residues 1-190 form the SMP-LTD domain; that stretch reads MSFRFNEAVF…LPSLIFNTSQ (190 aa). The segment covering 338–347 has biased composition (basic and acidic residues); that stretch reads RSNSNDDNAK. Positions 338 to 375 are disordered; the sequence is RSNSNDDNAKPRRRKIKCKKTRTPSNLQSQGEQAVDDS. Residues 348–359 are compositionally biased toward basic residues; the sequence is PRRRKIKCKKTR.

It belongs to the MDM34 family. As to quaternary structure, component of the ER-mitochondria encounter structure (ERMES) or MDM complex, composed of MMM1, MDM10, MDM12 and MDM34. Post-translationally, ubiquitinated by a SCF (SKP1-CUL1-F-box protein) E3 ubiquitin-protein ligase complex containing the F-box protein MDM30. Ubiquitination is important for mitochondrial integrity.

Its subcellular location is the mitochondrion outer membrane. In terms of biological role, component of the ERMES/MDM complex, which serves as a molecular tether to connect the endoplasmic reticulum (ER) and mitochondria. Components of this complex are involved in the control of mitochondrial shape and protein biogenesis, and function in nonvesicular lipid trafficking between the ER and mitochondria. MDM34 is required for the interaction of the ER-resident membrane protein MMM1 and the outer mitochondrial membrane-resident beta-barrel protein MDM10. This is Mitochondrial distribution and morphology protein 34 from Saccharomyces cerevisiae (strain RM11-1a) (Baker's yeast).